Here is a 96-residue protein sequence, read N- to C-terminus: Large ribosomal subunit protein eL14 (96 aa).

This sequence belongs to the eukaryotic ribosomal protein eL14 family.

The polypeptide is Large ribosomal subunit protein eL14 (Staphylothermus marinus (strain ATCC 43588 / DSM 3639 / JCM 9404 / F1)).